The sequence spans 207 residues: Large ribosomal subunit protein uL4 (207 aa).

Residues 49 to 78 (HAVKNRSAVSGGGRKPWRQKGTGRARQGSI) form a disordered region.

This sequence belongs to the universal ribosomal protein uL4 family. As to quaternary structure, part of the 50S ribosomal subunit.

One of the primary rRNA binding proteins, this protein initially binds near the 5'-end of the 23S rRNA. It is important during the early stages of 50S assembly. It makes multiple contacts with different domains of the 23S rRNA in the assembled 50S subunit and ribosome. Its function is as follows. Forms part of the polypeptide exit tunnel. This is Large ribosomal subunit protein uL4 from Streptococcus equi subsp. zooepidemicus (strain H70).